The chain runs to 46 residues: Apamin (46 aa).

A signal peptide spans 1-27; that stretch reads MISMLRCISLFLSVILITGYFVTPVMS. Intrachain disulfides connect C28/C38 and C30/C42. Residues 40–41 form an essential for toxin activity region; it reads RR. Position 45 is a histidine amide (H45).

In terms of tissue distribution, expressed by the venom gland.

The protein localises to the secreted. Neurotoxin that blocks voltage-independent calcium-activated potassium channels (KCNN1=SK1, KCNN2=SK2, KCNN3=SK3). This is Apamin from Apis cerana cerana (Oriental honeybee).